The chain runs to 529 residues: Peptide chain release factor 3 (529 aa).

One can recognise a tr-type G domain in the interval 11–280 (SKRRTFAIIS…GLTEWAPAPK (270 aa)). GTP-binding positions include 20-27 (SHPDAGKT), 88-92 (DTPGH), and 142-145 (NKLD).

The protein belongs to the TRAFAC class translation factor GTPase superfamily. Classic translation factor GTPase family. PrfC subfamily.

The protein resides in the cytoplasm. Functionally, increases the formation of ribosomal termination complexes and stimulates activities of RF-1 and RF-2. It binds guanine nucleotides and has strong preference for UGA stop codons. It may interact directly with the ribosome. The stimulation of RF-1 and RF-2 is significantly reduced by GTP and GDP, but not by GMP. This is Peptide chain release factor 3 from Vibrio parahaemolyticus serotype O3:K6 (strain RIMD 2210633).